Here is a 481-residue protein sequence, read N- to C-terminus: Proline--tRNA ligase (481 aa).

This sequence belongs to the class-II aminoacyl-tRNA synthetase family. ProS type 3 subfamily. As to quaternary structure, homodimer.

Its subcellular location is the cytoplasm. It catalyses the reaction tRNA(Pro) + L-proline + ATP = L-prolyl-tRNA(Pro) + AMP + diphosphate. Functionally, catalyzes the attachment of proline to tRNA(Pro) in a two-step reaction: proline is first activated by ATP to form Pro-AMP and then transferred to the acceptor end of tRNA(Pro). In Chlorobium chlorochromatii (strain CaD3), this protein is Proline--tRNA ligase.